The chain runs to 473 residues: Kynurenine 3-monooxygenase (473 aa).

The protein belongs to the aromatic-ring hydroxylase family. KMO subfamily. It depends on FAD as a cofactor.

It localises to the mitochondrion outer membrane. The catalysed reaction is L-kynurenine + NADPH + O2 + H(+) = 3-hydroxy-L-kynurenine + NADP(+) + H2O. Its pathway is cofactor biosynthesis; NAD(+) biosynthesis; quinolinate from L-kynurenine: step 1/3. Its function is as follows. Catalyzes the hydroxylation of L-kynurenine (L-Kyn) to form 3-hydroxy-L-kynurenine (L-3OHKyn). Required for synthesis of quinolinic acid. The polypeptide is Kynurenine 3-monooxygenase (Debaryomyces hansenii (strain ATCC 36239 / CBS 767 / BCRC 21394 / JCM 1990 / NBRC 0083 / IGC 2968) (Yeast)).